The primary structure comprises 66 residues: Beta-mammal toxin Cv5 (66 aa).

An LCN-type CS-alpha/beta domain is found at 1–66; that stretch reads KEGYIVNYYD…VWPLPKKKCN (66 aa). Intrachain disulfides connect Cys-12–Cys-65, Cys-16–Cys-41, Cys-25–Cys-46, and Cys-29–Cys-48.

As to expression, expressed by the venom gland.

The protein resides in the secreted. With respect to regulation, is susceptible to be neutralized by human antibodies scFvs 10FG2 and HV. Beta toxins bind voltage-independently at site-4 of sodium channels (Nav) and reduces peak current and shifts the voltage of activation toward more negative potentials thereby affecting sodium channel activation and promoting spontaneous and repetitive firing. This toxin is moderately toxic to mice. This is Beta-mammal toxin Cv5 from Centruroides villegasi (Scorpion).